The following is a 392-amino-acid chain: uncharacterized protein (392 aa).

This is an uncharacterized protein from Encephalitozoon cuniculi (strain GB-M1) (Microsporidian parasite).